The following is a 266-amino-acid chain: Large ribosomal subunit protein uL3 (266 aa).

Positions 124–149 (NQKIGPKSHGGGGGSKPVRQTGSLGD) are disordered.

This sequence belongs to the universal ribosomal protein uL3 family. Part of the 50S ribosomal subunit. Forms a cluster with proteins L14 and L19.

Its function is as follows. One of the primary rRNA binding proteins, it binds directly near the 3'-end of the 23S rRNA, where it nucleates assembly of the 50S subunit. This Mycoplasmopsis pulmonis (strain UAB CTIP) (Mycoplasma pulmonis) protein is Large ribosomal subunit protein uL3.